Here is a 652-residue protein sequence, read N- to C-terminus: Coiled-coil domain-containing protein 81 (652 aa).

S206 carries the post-translational modification Phosphoserine. Positions 238 to 256 are enriched in basic and acidic residues; that stretch reads KCKLKDQSDKEEGTRDISS. Positions 238–258 are disordered; that stretch reads KCKLKDQSDKEEGTRDISSPK. Phosphoserine is present on residues S275, S296, and S417. Positions 436–493 form a coiled coil; that stretch reads MDNRQENEIKQRQYRELMDRLEQVQLTEELAAQRAKFLKDKMEETQCYKRALDAQIKN.

It is found in the cytoplasm. It localises to the cytoskeleton. The protein localises to the microtubule organizing center. Its subcellular location is the centrosome. In Homo sapiens (Human), this protein is Coiled-coil domain-containing protein 81 (CCDC81).